The chain runs to 518 residues: Cytochrome P450 monooxygenase pyr3 (518 aa).

Residues 26-46 (GVAIVLFLAPLALHLVSSYLF) form a helical membrane-spanning segment. Heme is bound at residue Cys458.

The protein belongs to the cytochrome P450 family. It depends on heme as a cofactor.

It localises to the membrane. Its pathway is secondary metabolite biosynthesis; terpenoid biosynthesis. Functionally, cytochrome P450 monooxygenase; part of the gene cluster that mediates the biosynthesis of pyripyropene A, a specific human acyl-coenzyme A:cholesterol acyltransferase 2 inhibitor. The first step of the pathway is the synthesis of nicotinyl-CoA from nicotinic acid by the nicotinic acid-CoA ligase pyr1. Nicotinyl-CoA is then a substrate of polyketide synthase pyr2 to produce 4-hydroxy-6-(3-pyridinyl)-2H-pyran-2-one (HPPO) which is further prenylated by the polyprenyl transferase pyr6 to yield farnesyl-HPPO. The next steps consist of an epoxidation of farnesyl-HPPO to epoxyfarnesyl-HPPO by FAD-dependent monooxygenase pyr5 and a cyclization of the terpenoid portion by the terpene cyclase pyr4 to yield deacetyl-pyripyropene E. The 2 cytochrome P450 monooxygenases pyr3 and pyr9, and the 2 acetyltransferases pyr7 and pyr8 are involved in the conversion of deacetyl-pyripyropene E into pyripyropene A through several cycles of oxidation and acetylation steps. Pyr7 acetylates deacetyl-pyripyropene E to pyripyropene E which is oxidized to 11-deacetyl-pyripyropene O by pyr3, which is in turn acetylated into pyripyropene O by pyr8. Pyripyropene O is then oxidized to deacetyl-pyripyropene A by pyr9. Deacetyl-pyripyropene A is finally acetylated to pyripyropene A by pyr8. This chain is Cytochrome P450 monooxygenase pyr3, found in Aspergillus fumigatus (strain ATCC MYA-4609 / CBS 101355 / FGSC A1100 / Af293) (Neosartorya fumigata).